The following is a 558-amino-acid chain: Adenine deaminase (558 aa).

The protein belongs to the metallo-dependent hydrolases superfamily. Adenine deaminase family. It depends on Mn(2+) as a cofactor.

The catalysed reaction is adenine + H2O + H(+) = hypoxanthine + NH4(+). In Methanoregula boonei (strain DSM 21154 / JCM 14090 / 6A8), this protein is Adenine deaminase.